The sequence spans 65 residues: Large ribosomal subunit protein bL28 (65 aa).

Positions 1–21 (MAKKDQLTLRGPLYGNNRSHS) are disordered.

It belongs to the bacterial ribosomal protein bL28 family.

This is Large ribosomal subunit protein bL28 from Mycoplasma pneumoniae (strain ATCC 29342 / M129 / Subtype 1) (Mycoplasmoides pneumoniae).